Here is a 221-residue protein sequence, read N- to C-terminus: Protein N-terminal glutamine amidohydrolase (221 aa).

The residue at position 2 (Ser-2) is an N-acetylserine. Catalysis depends on residues Cys-23, His-79, and Asp-97.

The protein belongs to the NTAQ1 family. Monomer.

The enzyme catalyses N-terminal L-glutaminyl-[protein] + H2O = N-terminal L-glutamyl-[protein] + NH4(+). In terms of biological role, mediates the side-chain deamidation of N-terminal glutamine residues to glutamate, an important step in N-end rule pathway of protein degradation. Conversion of the resulting N-terminal glutamine to glutamate renders the protein susceptible to arginylation, polyubiquitination and degradation as specified by the N-end rule. Does not act on substrates with internal or C-terminal glutamine and does not act on non-glutamine residues in any position. Involved in immune response. Controls the expression of specific defense-response genes, activates the synthesis pathway for the phytoalexin camalexin, and influences basal resistance to the hemibiotroph pathogen Pseudomonas syringae pv tomato (Pst). This chain is Protein N-terminal glutamine amidohydrolase, found in Arabidopsis thaliana (Mouse-ear cress).